A 336-amino-acid chain; its full sequence is F420-dependent glucose-6-phosphate dehydrogenase (336 aa).

Asp-39 contributes to the coenzyme F420-(gamma-Glu)n binding site. His-40 functions as the Proton donor in the catalytic mechanism. Residues Thr-76 and 107-108 (TG) each bind coenzyme F420-(gamma-Glu)n. Glu-109 acts as the Proton acceptor in catalysis. Coenzyme F420-(gamma-Glu)n-binding positions include Asn-112, 177–178 (GG), and 180–181 (VV). Substrate is bound by residues Thr-195, Lys-198, Lys-259, and Arg-283.

Belongs to the F420-dependent glucose-6-phosphate dehydrogenase family. In terms of assembly, homodimer.

It catalyses the reaction oxidized coenzyme F420-(gamma-L-Glu)(n) + D-glucose 6-phosphate + H(+) = 6-phospho-D-glucono-1,5-lactone + reduced coenzyme F420-(gamma-L-Glu)(n). Catalyzes the coenzyme F420-dependent oxidation of glucose 6-phosphate (G6P) to 6-phosphogluconolactone. Appears to have a role in resistance to oxidative stress, via its consumption of G6P that serves as a source of reducing power to combat oxidative stress in mycobacteria. The protein is F420-dependent glucose-6-phosphate dehydrogenase of Mycolicibacterium fortuitum (Mycobacterium fortuitum).